Consider the following 547-residue polypeptide: MRQVLSSLLVIAGLVSGQAIAAPESPPHADIRDSGFVYCVSGQVNTFNPSKASSGLIVDTLAAQFYDRLLDVDPYTYRLMPELAESWEVLDNGATYRFHLRRDVPFQKTDWFTPTRKMNADDVVFTFQRIFDRNNPWHNVNGSNFPYFDSLQFADNVKSVRKLDNHTVEFRLAQPDASFLWHLATHYASVMSAEYARKLEKEDRQEQLDRQPVGTGPYQLSEYRAGQFIRLQRHDDFWRGKPLMPQVVVDLGSGGTGRLSKLLTGECDVLAWPAASQLSILRDDPRLRLTLRPGMNVAYLAFNTAKPPLNNPAVRHALALAINNQRLMQSIYYGTAETAASILPRASWAYDNEAKITEYNPAKSREQLKSLGLENLTLKLWVPTRSQAWNPSPLKTAELIQADMAQVGVKVVIVPVEGRFQEARLMDMSHDLTLSGWATDSNDPDSFFRPLLSCAAIHSQTNLAHWCDPKFDSVLRKALSSQQLAARIEAYDEAQSILAQELPILPLASSLRLQAYRYDIKGLVLSPFGNASFAGVYREKQDEVKKP.

Residues methionine 1–alanine 21 form the signal peptide.

It belongs to the bacterial solute-binding protein 5 family.

The protein localises to the periplasm. Not part of a putrescine export system. Very similar to a S.typhimurium protein implicated in antimicrobial peptide resistance, but the SapBCDF operon in E.coli is implicated in putrescine export. The sequence is that of Probable ABC transporter periplasmic-binding protein SapA (sapA) from Escherichia coli (strain K12).